A 329-amino-acid chain; its full sequence is Aspartate--ammonia ligase (329 aa).

The protein belongs to the class-II aminoacyl-tRNA synthetase family. AsnA subfamily.

The protein localises to the cytoplasm. The catalysed reaction is L-aspartate + NH4(+) + ATP = L-asparagine + AMP + diphosphate + H(+). It functions in the pathway amino-acid biosynthesis; L-asparagine biosynthesis; L-asparagine from L-aspartate (ammonia route): step 1/1. The chain is Aspartate--ammonia ligase from Ureaplasma urealyticum serovar 10 (strain ATCC 33699 / Western).